The chain runs to 321 residues: Altered inheritance of mitochondria protein 18, mitochondrial (321 aa).

A mitochondrion-targeting transit peptide spans 1–72 (MDRGRCANML…LLATSLYYRD (72 aa)).

This sequence belongs to the AIM18/AIM46 family.

Its subcellular location is the mitochondrion. This is Altered inheritance of mitochondria protein 18, mitochondrial (AIM18) from Saccharomyces cerevisiae (strain AWRI1631) (Baker's yeast).